The chain runs to 343 residues: Ribosomal RNA small subunit methyltransferase C (343 aa).

Belongs to the methyltransferase superfamily. RsmC family. Monomer.

It is found in the cytoplasm. The catalysed reaction is guanosine(1207) in 16S rRNA + S-adenosyl-L-methionine = N(2)-methylguanosine(1207) in 16S rRNA + S-adenosyl-L-homocysteine + H(+). Functionally, specifically methylates the guanine in position 1207 of 16S rRNA in the 30S particle. This Shewanella sediminis (strain HAW-EB3) protein is Ribosomal RNA small subunit methyltransferase C.